The chain runs to 235 residues: Probable RNA 2'-phosphotransferase (235 aa).

It belongs to the KptA/TPT1 family.

Its function is as follows. Removes the 2'-phosphate from RNA via an intermediate in which the phosphate is ADP-ribosylated by NAD followed by a presumed transesterification to release the RNA and generate ADP-ribose 1''-2''-cyclic phosphate (APPR&gt;P). May function as an ADP-ribosylase. The sequence is that of Probable RNA 2'-phosphotransferase from Thermoplasma volcanium (strain ATCC 51530 / DSM 4299 / JCM 9571 / NBRC 15438 / GSS1).